We begin with the raw amino-acid sequence, 334 residues long: Glucokinase-like protein PD_0680 (334 aa).

18–23 (ADVGGT) provides a ligand contact to ATP.

Belongs to the bacterial glucokinase family.

This Xylella fastidiosa (strain Temecula1 / ATCC 700964) protein is Glucokinase-like protein PD_0680.